Consider the following 292-residue polypeptide: Inhibitory synaptic factor 1 (292 aa).

The disordered stretch occupies residues 1–25 (MNIRGAPDLGQPSDDPNSGGERERI). Residues 30–63 (KMVIGQLEGILRELKEVAKELREVVSQIDKLTSD) are a coiled coil. The disordered stretch occupies residues 120–292 (TPSDSVDGPE…ATKQKAKGKN (173 aa)). Over residues 180–192 (GTRERVRFSDKVL) the composition is skewed to basic and acidic residues. Positions 198 to 216 (CDDEEGDGEEGEEEEEGDL) are enriched in acidic residues. The segment covering 263–285 (RNSSTQTVSDKSTQTVLPYTATK) has biased composition (polar residues).

The protein belongs to the INSYN1 family. Interacts with GPHN.

The protein localises to the postsynaptic density. Functionally, component of the protein machinery at the inhibitory synapses, probably acting as a scaffold. Inhibitory synapses dampen neuronal activity through postsynaptic hyperpolarization. This synaptic inhibition is fundamental for the functioning of the central nervous system, shaping and orchestrating the flow of information through neuronal networks to generate a precise neural code. This is Inhibitory synaptic factor 1 (Insyn1) from Mus musculus (Mouse).